The following is a 1370-amino-acid chain: DNA-directed RNA polymerase subunit beta (1370 aa).

It belongs to the RNA polymerase beta chain family. The RNAP catalytic core consists of 2 alpha, 1 beta, 1 beta' and 1 omega subunit. When a sigma factor is associated with the core the holoenzyme is formed, which can initiate transcription.

The enzyme catalyses RNA(n) + a ribonucleoside 5'-triphosphate = RNA(n+1) + diphosphate. In terms of biological role, DNA-dependent RNA polymerase catalyzes the transcription of DNA into RNA using the four ribonucleoside triphosphates as substrates. This chain is DNA-directed RNA polymerase subunit beta, found in Verminephrobacter eiseniae (strain EF01-2).